A 98-amino-acid chain; its full sequence is MNVTLVEINIKPERVDEFLEVFRANHEGALREPGNLRFDVLQDPEVKTRFFIYEAYKDDEAVLAHKKTPHYLACVEKLEEMMSQPRQKRSFIGLLPQV.

The 90-residue stretch at 2–91 (NVTLVEINIK…MSQPRQKRSF (90 aa)) folds into the ABM domain.

This sequence belongs to the LsrG family. As to quaternary structure, homodimer.

The protein localises to the cytoplasm. It catalyses the reaction (2S)-2-hydroxy-3,4-dioxopentyl phosphate = 3-hydroxy-2,4-dioxopentyl phosphate. In terms of biological role, involved in the degradation of phospho-AI-2, thereby terminating induction of the lsr operon and closing the AI-2 signaling cycle. Catalyzes the conversion of (4S)-4-hydroxy-5-phosphonooxypentane-2,3-dione (P-DPD) to 3-hydroxy-5-phosphonooxypentane-2,4-dione (P-HPD). The sequence is that of (4S)-4-hydroxy-5-phosphonooxypentane-2,3-dione isomerase from Klebsiella pneumoniae subsp. pneumoniae (strain ATCC 700721 / MGH 78578).